Here is a 467-residue protein sequence, read N- to C-terminus: Transcription factor fos-1 (467 aa).

A compositionally biased stretch (low complexity) spans 1 to 22 (MFEQPSSTTNTTTSSGSGSDSN). Disordered stretches follow at residues 1 to 38 (MFEQPSSTTNTTTSSGSGSDSNHYFELGPRNPINQAHP) and 139 to 179 (QYST…AAAR). One can recognise a bZIP domain in the interval 163-226 (DDKRLKRRQR…NSLKNYLETH (64 aa)). The interval 165 to 205 (KRLKRRQRNKEAAARCRQRRIDLMKELQDQVNDFKNSNDKK) is basic motif. Positions 212-219 (IRNKLNSL) are leucine-zipper. Disordered stretches follow at residues 266 to 291 (RADSVPYSIRSGHSSSSSEQHSPVED) and 395 to 467 (QPIT…LRPL). Over residues 273–286 (SIRSGHSSSSSEQH) the composition is skewed to low complexity. Polar residues predominate over residues 434–454 (SSNTGLTPSGQPTMNFVSTPT). Phosphothreonine occurs at positions 440, 452, and 454.

Belongs to the bZIP family. Fos subfamily. Homodimer. Heterodimer; with jun-1. Interacts with kgb-1 and hda-1. In terms of processing, may be phosphorylated by kgb-1. Phosphorylation at Thr-440 increases sensitivity to heavy metal stress. Phosphorylation inhibits homodimer formation, and promotes association with target promoters. Expressed in anchor cells. Isoform a is expressed in somatic gonad cells that neighbor anchor cells. Isoform b is expressed in vulval cells, the uterine cells that neighbor anchor cells and the spermatheca.

The protein localises to the nucleus. Its function is as follows. Developmentally regulated transcription factor which binds and recognizes the enhancer DNA sequence 5'-TGA[CG]TCA-3'. Plays a role the development of the reproductive system, controlling events including anchor cell (AC) fusion and invasion. Regulates downstream transcriptional targets, including zmp-1, cdh-3, him-4 and mig10b, to promote the removal of the gonadal basement membrane during AC invasion. Regulates aff-1 expression to promote AC fusion. With jun-1 regulates egl-1 and lin-12 expression to allow uterine cell specification and development. In terms of biological role, required for ovulation. Controls plc-1 expression in the spermatheca to regulate spermathecal valve dilation. Acts with hda-1 as a downstream repressor of the kgb-1 mediated stress response pathway that transcriptionally represses genes involved in the response to heavy metals, such as kreg-1. The sequence is that of Transcription factor fos-1 from Caenorhabditis elegans.